Here is a 993-residue protein sequence, read N- to C-terminus: Desmoglein-3 (993 aa).

The N-terminal stretch at 1–23 (MTWLLFRTSGALAILMVLILVHG) is a signal peptide. The propeptide occupies 24–48 (ELRIETKGQHGEDETAIQGRRRYKR). 4 Cadherin domains span residues 48–156 (REWV…APVF), 157–266 (SQSI…FPMF), 267–386 (KESQ…HPAS), and 383–494 (HPAS…CPTV). Over 49–617 (EWVKFAKPCR…GKRPSGRLGS (569 aa)) the chain is Extracellular. N-linked (GlcNAc...) asparagine glycans are attached at residues Asn-109 and Asn-179. Residues Asn-458 and Asn-544 are each glycosylated (N-linked (GlcNAc...) asparagine). The helical transmembrane segment at 618–638 (AAIGLLLLGLLLLLLAPLLLL) threads the bilayer. Topologically, residues 639-993 (TCDYGVGPIG…CTEDPCSRLI (355 aa)) are cytoplasmic. A required for interaction with CTNND1 and localization at cell-cell junctions region spans residues 641–713 (DYGVGPIGGV…NTYAGGTVVE (73 aa)). Desmoglein repeat repeat units follow at residues 903-929 (LSASSSVLQSATSIPNPVQHGSYMVTE) and 930-960 (TYSASGSLVQPTTTVLEPLLTQNVTVTERVI).

As to quaternary structure, homodimer. Part of a complex that contains DSG3, PKP1, YAP1 and YWHAG; the complex is required for localization of DSG3 and YAP1 to the cell membrane in keratinocytes. Interacts with PKP2. Interacts with CTNND1; the interaction facilitates DSG3 localization and retention at cell-cell junctions. Interacts with CDH1; the interaction is required for CDH1 localization to developing adherens junctions. Interacts with RAC1; the interaction is required for DSG3 translocation to cell-cell junctions, organization of cortical F-actin bundles and actin anchoring at cell-cell junctions. Interacts with DSC3; the interaction may limit the interaction of DSC3 with p38MAPK family members and therefore repress p38MAPK signaling activation.

The protein resides in the cell membrane. Its subcellular location is the cell junction. The protein localises to the desmosome. It is found in the cytoplasm. It localises to the tight junction. In terms of biological role, a component of desmosome cell-cell junctions which are required for positive regulation of cellular adhesion. Required for adherens and desmosome junction assembly in response to mechanical force in keratinocytes. Required for desmosome-mediated cell-cell adhesion of cells surrounding the telogen hair club and the basal layer of the outer root sheath epithelium, consequently is essential for the anchoring of telogen hairs in the hair follicle. Required for the maintenance of the epithelial barrier via promoting desmosome-mediated intercellular attachment of suprabasal epithelium to basal cells. May play a role in the protein stability of the desmosome plaque components DSP, JUP, PKP1, PKP2 and PKP3. Required for YAP1 localization at the plasma membrane in keratinocytes in response to mechanical strain, via the formation of an interaction complex composed of DSG3, PKP1 and YWHAG. May also be involved in the positive regulation of YAP1 target gene transcription and as a result cell proliferation. Positively regulates cellular contractility and cell junction formation via organization of cortical F-actin bundles and anchoring of actin to tight junctions, in conjunction with RAC1. The cytoplasmic pool of DSG3 is required for the localization of CDH1 and CTNNB1 at developing adherens junctions, potentially via modulation of SRC activity. Inhibits keratinocyte migration via suppression of p38MAPK signaling, may therefore play a role in moderating wound healing. The chain is Desmoglein-3 (DSG3) from Canis lupus familiaris (Dog).